The sequence spans 137 residues: Putative pre-16S rRNA nuclease (137 aa).

It belongs to the YqgF nuclease family.

Its subcellular location is the cytoplasm. In terms of biological role, could be a nuclease involved in processing of the 5'-end of pre-16S rRNA. The sequence is that of Putative pre-16S rRNA nuclease from Actinobacillus pleuropneumoniae serotype 5b (strain L20).